Consider the following 344-residue polypeptide: Anthranilate phosphoribosyltransferase (344 aa).

5-phospho-alpha-D-ribose 1-diphosphate contacts are provided by residues glycine 85, 88–89 (GD), threonine 93, 95–98 (NIST), 113–121 (KHGGRSVSS), and serine 125. An anthranilate-binding site is contributed by glycine 85. Serine 97 provides a ligand contact to Mg(2+). Arginine 171 is a binding site for anthranilate. Positions 230 and 231 each coordinate Mg(2+).

Belongs to the anthranilate phosphoribosyltransferase family. Homodimer. It depends on Mg(2+) as a cofactor.

It catalyses the reaction N-(5-phospho-beta-D-ribosyl)anthranilate + diphosphate = 5-phospho-alpha-D-ribose 1-diphosphate + anthranilate. Its pathway is amino-acid biosynthesis; L-tryptophan biosynthesis; L-tryptophan from chorismate: step 2/5. In terms of biological role, catalyzes the transfer of the phosphoribosyl group of 5-phosphorylribose-1-pyrophosphate (PRPP) to anthranilate to yield N-(5'-phosphoribosyl)-anthranilate (PRA). This is Anthranilate phosphoribosyltransferase from Delftia acidovorans (strain DSM 14801 / SPH-1).